The primary structure comprises 176 residues: Acireductone dioxygenase (176 aa).

Positions 91, 93, 97, and 136 each coordinate Fe(2+). Residues His91, His93, Glu97, and His136 each coordinate Ni(2+).

The protein belongs to the acireductone dioxygenase (ARD) family. As to quaternary structure, monomer. Requires Fe(2+) as cofactor. It depends on Ni(2+) as a cofactor.

It catalyses the reaction 1,2-dihydroxy-5-(methylsulfanyl)pent-1-en-3-one + O2 = 3-(methylsulfanyl)propanoate + CO + formate + 2 H(+). The catalysed reaction is 1,2-dihydroxy-5-(methylsulfanyl)pent-1-en-3-one + O2 = 4-methylsulfanyl-2-oxobutanoate + formate + 2 H(+). The protein operates within amino-acid biosynthesis; L-methionine biosynthesis via salvage pathway; L-methionine from S-methyl-5-thio-alpha-D-ribose 1-phosphate: step 5/6. Functionally, catalyzes 2 different reactions between oxygen and the acireductone 1,2-dihydroxy-3-keto-5-methylthiopentene (DHK-MTPene) depending upon the metal bound in the active site. Fe-containing acireductone dioxygenase (Fe-ARD) produces formate and 2-keto-4-methylthiobutyrate (KMTB), the alpha-ketoacid precursor of methionine in the methionine recycle pathway. Ni-containing acireductone dioxygenase (Ni-ARD) produces methylthiopropionate, carbon monoxide and formate, and does not lie on the methionine recycle pathway. This chain is Acireductone dioxygenase, found in Picosynechococcus sp. (strain ATCC 27264 / PCC 7002 / PR-6) (Agmenellum quadruplicatum).